Consider the following 82-residue polypeptide: Penaeidin-3h (82 aa).

A signal peptide spans Met-1–Gly-19. At Gln-20 the chain carries Pyrrolidone carboxylic acid. 2 disulfide bridges follow: Cys-55–Cys-73 and Cys-67–Cys-74. Position 81 is a serine amide (Ser-81).

It belongs to the penaeidin family.

It localises to the cytoplasmic granule. Antibacterial and antifungal activity. Presents chitin-binding activity. The protein is Penaeidin-3h of Penaeus vannamei (Whiteleg shrimp).